A 572-amino-acid chain; its full sequence is Proline--tRNA ligase (572 aa).

It belongs to the class-II aminoacyl-tRNA synthetase family. ProS type 1 subfamily. In terms of assembly, homodimer.

The protein localises to the cytoplasm. The enzyme catalyses tRNA(Pro) + L-proline + ATP = L-prolyl-tRNA(Pro) + AMP + diphosphate. In terms of biological role, catalyzes the attachment of proline to tRNA(Pro) in a two-step reaction: proline is first activated by ATP to form Pro-AMP and then transferred to the acceptor end of tRNA(Pro). As ProRS can inadvertently accommodate and process non-cognate amino acids such as alanine and cysteine, to avoid such errors it has two additional distinct editing activities against alanine. One activity is designated as 'pretransfer' editing and involves the tRNA(Pro)-independent hydrolysis of activated Ala-AMP. The other activity is designated 'posttransfer' editing and involves deacylation of mischarged Ala-tRNA(Pro). The misacylated Cys-tRNA(Pro) is not edited by ProRS. The polypeptide is Proline--tRNA ligase (Escherichia coli O9:H4 (strain HS)).